The chain runs to 448 residues: Probable sodium-coupled neutral amino acid transporter 6 (448 aa).

2 stretches are compositionally biased toward polar residues: residues 1–12 (MQASDSSINTLD) and 26–36 (LLANSPQRRSS). The interval 1–36 (MQASDSSINTLDGHQVSAGRDESTPLLANSPQRRSS) is disordered. 5 helical membrane passes run 40 to 60 (SFGF…ILGL), 69 to 89 (ILGF…SIHL), 117 to 137 (LVAC…LFII), 164 to 184 (LLII…KIGF), and 185 to 205 (LGYT…VIVI). C212 and C232 form a disulfide bridge. Residues N218 and N228 are each glycosylated (N-linked (GlcNAc...) asparagine). Helical transmembrane passes span 244 to 264 (AFAL…LPIY), 281 to 301 (VGIA…YLTF), 321 to 341 (VLII…VPLI), 365 to 385 (ILVT…VPDM), 388 to 408 (VFGV…PGLF), and 425 to 445 (ACGL…LIIM).

Belongs to the amino acid/polyamine transporter 2 family.

It localises to the cell membrane. Functionally, probable sodium-dependent amino acid/proton antiporter, could be a neuronal transporter for glutamate. The protein is Probable sodium-coupled neutral amino acid transporter 6 (slc38a6) of Xenopus tropicalis (Western clawed frog).